The sequence spans 130 residues: Small ribosomal subunit protein uS9 (130 aa).

The protein belongs to the universal ribosomal protein uS9 family.

This chain is Small ribosomal subunit protein uS9, found in Buchnera aphidicola subsp. Acyrthosiphon pisum (strain Tuc7).